The chain runs to 166 residues: MALRLEDKKAIVAEVNEAAKGALSAVVADSRGVTVGAMTVLRKAARANGVYVRVVRNTLAKRAVEGTAFECLAETFTGPTLIAFSNEHPGAAARLLKDFAKGNAKFEVKGAAFEGMFIPAVDIDRLAKLPTYDEALAQLMMTMKEASAGKFVRTLAALRDQKQEAA.

It belongs to the universal ribosomal protein uL10 family. Part of the ribosomal stalk of the 50S ribosomal subunit. The N-terminus interacts with L11 and the large rRNA to form the base of the stalk. The C-terminus forms an elongated spine to which L12 dimers bind in a sequential fashion forming a multimeric L10(L12)X complex.

In terms of biological role, forms part of the ribosomal stalk, playing a central role in the interaction of the ribosome with GTP-bound translation factors. The protein is Large ribosomal subunit protein uL10 of Shewanella denitrificans (strain OS217 / ATCC BAA-1090 / DSM 15013).